The chain runs to 372 residues: tRNA pseudouridine synthase D (372 aa).

The Nucleophile role is filled by D85. Residues 160–330 (GFANYFGYQR…MQGSRRFMWG (171 aa)) form the TRUD domain.

The protein belongs to the pseudouridine synthase TruD family.

It catalyses the reaction uridine(13) in tRNA = pseudouridine(13) in tRNA. Its function is as follows. Responsible for synthesis of pseudouridine from uracil-13 in transfer RNAs. The polypeptide is tRNA pseudouridine synthase D (Campylobacter jejuni subsp. jejuni serotype O:2 (strain ATCC 700819 / NCTC 11168)).